The sequence spans 309 residues: Isoaspartyl peptidase/L-asparaginase (309 aa).

Thr-166 serves as the catalytic Nucleophile. Residues 194–197 (RVGD) and 217–220 (TGHG) each bind substrate.

Belongs to the Ntn-hydrolase family. Heterodimer of an alpha and beta chain produced by autocleavage. In terms of processing, cleaved into an alpha and beta chain by autocatalysis; this activates the enzyme. The N-terminal residue of the beta subunit is responsible for the nucleophile hydrolase activity.

It localises to the cytoplasm. It catalyses the reaction L-asparagine + H2O = L-aspartate + NH4(+). The enzyme catalyses Cleavage of a beta-linked Asp residue from the N-terminus of a polypeptide.. In terms of biological role, has both L-asparaginase and beta-aspartyl peptidase activity. Does not have aspartylglucosaminidase activity and is inactive toward GlcNAc-L-Asn. Likewise, has no activity toward glutamine. The polypeptide is Isoaspartyl peptidase/L-asparaginase (asrgl1) (Xenopus laevis (African clawed frog)).